The sequence spans 265 residues: Ubiquinone biosynthesis protein COQ4 homolog, mitochondrial (265 aa).

Residues 1-30 constitute a mitochondrion transit peptide; that stretch reads MMQRSWQSWRRGLTLGLASRRSYVASVEAP. Residues His-170, Asp-171, His-174, and Glu-186 each contribute to the Zn(2+) site.

The protein belongs to the COQ4 family. In terms of assembly, component of a multi-subunit COQ enzyme complex. Requires Zn(2+) as cofactor.

It localises to the mitochondrion inner membrane. It carries out the reaction a 4-hydroxy-3-methoxy-5-(all-trans-polyprenyl)benzoate + H(+) = a 2-methoxy-6-(all-trans-polyprenyl)phenol + CO2. Its pathway is cofactor biosynthesis; ubiquinone biosynthesis. Its function is as follows. Lyase that catalyzes the C1-decarboxylation of 4-hydroxy-3-methoxy-5-(all-trans-polyprenyl)benzoic acid into 2-methoxy-6-(all-trans-polyprenyl)phenol during ubiquinone biosynthesis. In Drosophila virilis (Fruit fly), this protein is Ubiquinone biosynthesis protein COQ4 homolog, mitochondrial.